Reading from the N-terminus, the 362-residue chain is Spermidine/putrescine import ATP-binding protein PotA (362 aa).

Positions 6-236 (VELKHVGKRY…PVNHFVADFI (231 aa)) constitute an ABC transporter domain. Position 38 to 45 (38 to 45 (GPSGSGKT)) interacts with ATP.

This sequence belongs to the ABC transporter superfamily. Spermidine/putrescine importer (TC 3.A.1.11.1) family. The complex is composed of two ATP-binding proteins (PotA), two transmembrane proteins (PotB and PotC) and a solute-binding protein (PotD).

The protein localises to the cell membrane. The catalysed reaction is ATP + H2O + polyamine-[polyamine-binding protein]Side 1 = ADP + phosphate + polyamineSide 2 + [polyamine-binding protein]Side 1.. Its function is as follows. Part of the ABC transporter complex PotABCD involved in spermidine/putrescine import. Responsible for energy coupling to the transport system. This is Spermidine/putrescine import ATP-binding protein PotA from Lacticaseibacillus paracasei (strain ATCC 334 / BCRC 17002 / CCUG 31169 / CIP 107868 / KCTC 3260 / NRRL B-441) (Lactobacillus paracasei).